The sequence spans 125 residues: Large-conductance mechanosensitive channel (125 aa).

3 helical membrane passes run 19–39 (VGVIIGGAFTAIVNSLVKYII), 42–62 (FLGLFVGAIDFSDLVFKIGNA), and 66–86 (VGSFLNAVINFLIIAFVVFLM).

The protein belongs to the MscL family. Homopentamer.

It is found in the cell membrane. Channel that opens in response to stretch forces in the membrane lipid bilayer. May participate in the regulation of osmotic pressure changes within the cell. The chain is Large-conductance mechanosensitive channel from Ligilactobacillus salivarius (strain UCC118) (Lactobacillus salivarius).